A 190-amino-acid polypeptide reads, in one-letter code: MSATVEEIADDVQDLNVQEFDSDDAGADVHASDKVASRAERKSRKALQGIGLKKVGGITRVTMRRPRGHLYVIAQPEVYKSSHSDVYIVFGEAKAEDMSQLAQAQAAQQMAQAEAQERLLAESLQNSSASGAEKKVEEEEEDDDSPIDEEGVDAKDIDLVMQQVSCSRRKAVKALKESNGDLINAIMNAS.

Disordered regions lie at residues 20-42 (FDSDDAGADVHASDKVASRAERK) and 123-155 (SLQNSSASGAEKKVEEEEEDDDSPIDEEGVDAK). Residues 30–40 (HASDKVASRAE) show a composition bias toward basic and acidic residues. In terms of domain architecture, NAC-A/B spans 37–102 (SRAERKSRKA…AKAEDMSQLA (66 aa)). Acidic residues predominate over residues 138 to 151 (EEEEDDDSPIDEEG). The 38-residue stretch at 152-189 (VDAKDIDLVMQQVSCSRRKAVKALKESNGDLINAIMNA) folds into the UBA domain.

It belongs to the NAC-alpha family. Part of the nascent polypeptide-associated complex (NAC), consisting of EGD2 and EGD1. NAC associates with ribosomes via EGD1.

It is found in the cytoplasm. The protein localises to the nucleus. Functionally, component of the nascent polypeptide-associated complex (NAC), a dynamic component of the ribosomal exit tunnel, protecting the emerging polypeptides from interaction with other cytoplasmic proteins to ensure appropriate nascent protein targeting. The NAC complex also promotes mitochondrial protein import by enhancing productive ribosome interactions with the outer mitochondrial membrane and blocks the inappropriate interaction of ribosomes translating non-secretory nascent polypeptides with translocation sites in the membrane of the endoplasmic reticulum. EGD2 may also be involved in transcription regulation. This is Nascent polypeptide-associated complex subunit alpha (EGD2) from Mycosarcoma maydis (Corn smut fungus).